Here is a 148-residue protein sequence, read N- to C-terminus: uncharacterized protein (148 aa).

A signal peptide spans 1–23; the sequence is MKALVAVSAVAVVALLGVSSAQA. Residues 22–45 form a disordered region; sequence QADPEADPGAGEANYGGPPSSPRL.

It to M.leprae ML2452.

This is an uncharacterized protein from Mycobacterium bovis (strain ATCC BAA-935 / AF2122/97).